The sequence spans 36 residues: Trypsin inhibitor 2 (36 aa).

3 cysteine pairs are disulfide-bonded: cysteine 3/cysteine 20, cysteine 10/cysteine 24, and cysteine 19/cysteine 35.

Its function is as follows. Trypsin inhibitor. The protein is Trypsin inhibitor 2 of Spinacia oleracea (Spinach).